We begin with the raw amino-acid sequence, 208 residues long: MGGKWSKRVTGWPTVRERMRRAEPAELAADGVGAASRDLEKHGALTSSNTAATNADCAWLEAQEEEEVGFPVKPQVPLRPMTYKAALDLSHFLKEKGGLDGLIYSQKRQDILDLWVYHTQGYFPDWQNYTPGPGIRYPLTFGWCFKLVPVEPEKIEEANKGENNCLLHPMSQHGMDDPEREVLVWKSDSHLAFQHYARELHPEYYKNC.

Residue Gly-2 is the site of N-myristoyl glycine; by host attachment. Ser-6 carries the phosphoserine; by host modification. An acidic; interacts with host PACS1 and PACS2; stabilizes the interaction of NEF/MHC-I with host AP1M1; necessary for MHC-I internalization region spans residues 64 to 67; sequence EEEE. Residues 71–80 are SH3-binding; interaction with Src family tyrosine kinases; sequence PVKPQVPLRP. Residues 74 to 77 carry the PxxP; stabilizes the interaction of NEF/MHC-I with host AP1M1; necessary for MHC-I internalization motif; that stretch reads PQVP. The mediates dimerization, Nef-PTE1 interaction stretch occupies residues 110 to 126; the sequence is DILDLWVYHTQGYFPDW. Residues 150–182 form a binding to ATP6V1H region; it reads VEPEKIEEANKGENNCLLHPMSQHGMDDPEREV. Residues 166 to 167 carry the Dileucine internalization motif; necessary for CD4 internalization motif; that stretch reads LL. The short motif at 176-177 is the Diacidic; necessary for CD4 internalization element; that stretch reads DD.

Belongs to the lentivirus primate group Nef protein family. Monomer; cytosolic form. Homodimer; membrane bound form. Interacts with Nef associated p21-activated kinase (PAK2); this interaction activates PAK2. Associates with the Nef-MHC-I-AP1 complex; this complex is required for MHC-I internalization. Interacts (via C-terminus) with host PI3-kinase. Interacts with host PACS1; this interaction seems to be weak. Interacts with host PACS2. Interacts with host LCK and MAPK3; these interactions inhibit the kinase activity of the latter. Interacts with host ATP6V1H; this interaction may play a role in CD4 endocytosis. Associates with the CD4-Nef-AP2 complex; this complex is required for CD4 internalization. Interacts with host AP2 subunit alpha and AP2 subunit sigma2. Interacts with TCR-zeta chain; this interaction up-regulates the Fas ligand (FasL) surface expression. Interacts with host HCK, LYN, and SRC; these interactions activate the Src family kinases. Interacts with MAP3K5; this interaction inhibits the Fas and TNFR-mediated death signals. Interacts with beta-COP and PTE1. Interacts with human RACK1; this increases Nef phosphorylation by PKC. Interacts with TP53; this interaction decreases the half-life of TP53, protecting the infected cell against p53-mediated apoptosis. The virion-associated Nef proteins are cleaved by the viral protease to release the soluble C-terminal core protein. Nef is probably cleaved concomitantly with viral structural proteins on maturation of virus particles. In terms of processing, myristoylated. Post-translationally, phosphorylated on serine residues, probably by host PKCdelta and theta.

It is found in the host cell membrane. The protein resides in the virion. The protein localises to the secreted. Its subcellular location is the host Golgi apparatus membrane. Functionally, factor of infectivity and pathogenicity, required for optimal virus replication. Alters numerous pathways of T-lymphocyte function and down-regulates immunity surface molecules in order to evade host defense and increase viral infectivity. Alters the functionality of other immunity cells, like dendritic cells, monocytes/macrophages and NK cells. Its function is as follows. In infected CD4(+) T-lymphocytes, down-regulates the surface MHC-I, mature MHC-II, CD4, CD28, CCR5 and CXCR4 molecules. Mediates internalization and degradation of host CD4 through the interaction of with the cytoplasmic tail of CD4, the recruitment of AP-2 (clathrin adapter protein complex 2), internalization through clathrin coated pits, and subsequent transport to endosomes and lysosomes for degradation. Diverts host MHC-I molecules to the trans-Golgi network-associated endosomal compartments by an endocytic pathway to finally target them for degradation. MHC-I down-regulation may involve AP-1 (clathrin adapter protein complex 1) or possibly Src family kinase-ZAP70/Syk-PI3K cascade recruited by PACS2. In consequence infected cells are masked for immune recognition by cytotoxic T-lymphocytes. Decreasing the number of immune receptors also prevents reinfection by more HIV particles (superinfection). Down-regulates host SERINC3 and SERINC5 thereby excluding these proteins from the viral particles. Virion infectivity is drastically higher when SERINC3 or SERINC5 are excluded from the viral envelope, because these host antiviral proteins impair the membrane fusion event necessary for subsequent virion penetration. In terms of biological role, bypasses host T-cell signaling by inducing a transcriptional program nearly identical to that of anti-CD3 cell activation. Interaction with TCR-zeta chain up-regulates the Fas ligand (FasL). Increasing surface FasL molecules and decreasing surface MHC-I molecules on infected CD4(+) cells send attacking cytotoxic CD8+ T-lymphocytes into apoptosis. Plays a role in optimizing the host cell environment for viral replication without causing cell death by apoptosis. Protects the infected cells from apoptosis in order to keep them alive until the next virus generation is ready to strike. Inhibits the Fas and TNFR-mediated death signals by blocking MAP3K5/ASK1. Decreases the half-life of TP53, protecting the infected cell against p53-mediated apoptosis. Inhibits the apoptotic signals regulated by the Bcl-2 family proteins through the formation of a Nef/PI3-kinase/PAK2 complex that leads to activation of PAK2 and induces phosphorylation of host BAD. Functionally, extracellular Nef protein targets CD4(+) T-lymphocytes for apoptosis by interacting with CXCR4 surface receptors. This chain is Protein Nef, found in Human immunodeficiency virus type 1 group M subtype B (isolate MN) (HIV-1).